Reading from the N-terminus, the 682-residue chain is Beta-galactosidase (682 aa).

The first 23 residues, 1 to 23, serve as a signal peptide directing secretion; it reads MPGFLVRILPLLLPLLLLGPTRG. Residues 24–28 constitute a propeptide that is removed on maturation; it reads LRNAT. Asparagine 26 carries an N-linked (GlcNAc...) asparagine glycan. Residues tyrosine 83, glutamate 129, and asparagine 187 each contribute to the substrate site. Residue glutamate 188 is the Proton donor of the active site. An intrachain disulfide couples cysteine 195 to cysteine 230. A glycan (N-linked (GlcNAc...) asparagine) is linked at asparagine 247. The active-site Nucleophile is the glutamate 268. Tyrosine 333 lines the substrate pocket. N-linked (GlcNAc...) asparagine glycans are attached at residues asparagine 464, asparagine 498, asparagine 545, and asparagine 555. The cysteines at positions 626 and 634 are disulfide-linked.

It belongs to the glycosyl hydrolase 35 family. As to quaternary structure, homodimer. May form higher multimers.

The protein localises to the lysosome. The catalysed reaction is Hydrolysis of terminal non-reducing beta-D-galactose residues in beta-D-galactosides.. Cleaves beta-linked terminal galactosyl residues from gangliosides, glycoproteins, and glycosaminoglycans. This chain is Beta-galactosidase (GLB1), found in Macaca fascicularis (Crab-eating macaque).